The primary structure comprises 128 residues: Fumarate reductase subunit C (128 aa).

3 helical membrane-spanning segments follow: residues 31–51 (ATCI…ISLG), 67–87 (VVIL…TLYV), and 106–126 (ILKN…LVLV).

Belongs to the FrdC family. In terms of assembly, part of an enzyme complex containing four subunits: a flavoprotein (FrdA), an iron-sulfur protein (FrdB), and two hydrophobic anchor proteins (FrdC and FrdD).

It is found in the cell inner membrane. Its function is as follows. Anchors the catalytic components of the fumarate reductase complex to the cell membrane, binds quinones. The sequence is that of Fumarate reductase subunit C from Haemophilus ducreyi (strain 35000HP / ATCC 700724).